The sequence spans 352 residues: MTITTLSRQNIQALTPYQSARKLGGNGTIWLNANEYPTSPKFQLSGKDLNRYPEPQPQRVVQAYANYAGVSTENVLVTRGGDEGIELIIHTFCEPKQDAILFCPPTYGMYAVSAETAGVLSKTVPLTDDFQLNLPEIKNHLNDVKVVFVCSPNNPTGNLLKQSDILDLLQITAGKAIVVVDEAYIEFCPEASVINLLKNYPHLAIIRTLSKAFALAGLRCGFVLANPELIDILSKVIAPYPIPVPSADLAEQALRPANIATVQALTQELLSNRQWLAKALLVLHQVEKVYESEANYLLIKCQNGQAVFKALWEQGIILRDQNKTLHLQNCIRITVGTRNECEKVVEAIKEVK.

Lysine 211 carries the post-translational modification N6-(pyridoxal phosphate)lysine.

It belongs to the class-II pyridoxal-phosphate-dependent aminotransferase family. Histidinol-phosphate aminotransferase subfamily. Homodimer. Requires pyridoxal 5'-phosphate as cofactor.

The catalysed reaction is L-histidinol phosphate + 2-oxoglutarate = 3-(imidazol-4-yl)-2-oxopropyl phosphate + L-glutamate. Its pathway is amino-acid biosynthesis; L-histidine biosynthesis; L-histidine from 5-phospho-alpha-D-ribose 1-diphosphate: step 7/9. The protein is Histidinol-phosphate aminotransferase of Haemophilus influenzae (strain PittEE).